Consider the following 216-residue polypeptide: Methylthioribulose-1-phosphate dehydratase (216 aa).

Residues H101 and H103 each coordinate Zn(2+).

The protein belongs to the aldolase class II family. MtnB subfamily. Zn(2+) serves as cofactor.

The catalysed reaction is 5-(methylsulfanyl)-D-ribulose 1-phosphate = 5-methylsulfanyl-2,3-dioxopentyl phosphate + H2O. It participates in amino-acid biosynthesis; L-methionine biosynthesis via salvage pathway; L-methionine from S-methyl-5-thio-alpha-D-ribose 1-phosphate: step 2/6. Functionally, catalyzes the dehydration of methylthioribulose-1-phosphate (MTRu-1-P) into 2,3-diketo-5-methylthiopentyl-1-phosphate (DK-MTP-1-P). The sequence is that of Methylthioribulose-1-phosphate dehydratase from Bradyrhizobium sp. (strain BTAi1 / ATCC BAA-1182).